The chain runs to 653 residues: Protein fem-1 homolog A (653 aa).

ANK repeat units follow at residues 2 to 31, 40 to 70, 82 to 111, 115 to 145, 149 to 178, 182 to 211, and 214 to 243; these read DLHT…REEL, SGGT…SVEA, EGAP…SVNR, TNST…DLEV, HGHT…QVNR, KGNT…RMER, and YGMT…AGDE. Serine 108 carries the phosphoserine modification. The segment at 242-274 is disordered; sequence DEQAQPGLARVQPQGARSSPEEPPSGESYESCC. TPR repeat units lie at residues 282-316 and 374-407; these read VEAL…RHQG and SYYI…QQNN. ANK repeat units lie at residues 518–560 and 564–593; these read NGFT…DPDS and DNNT…HMDA.

This sequence belongs to the fem-1 family. Component of a CRL2 E3 ubiquitin-protein ligase complex, also named ECS (Elongin BC-CUL2/5-SOCS-box protein) complex, composed of CUL2, Elongin BC (ELOB and ELOC), RBX1 and substrate-specific adapter FEM1A. Interacts with PTGER4. Interacts with NFKB1; the interaction is direct. Post-translationally, phosphorylated; highly phosphorylated in myoblasts and myotubes. Phosphorylation at Ser-108 promotes PGE2-EP4-mediated inhibition of inflammation. Dephosphorylated by protein phosphatase 2A (PP2A).

It is found in the mitochondrion. The protein localises to the cytoplasm. It participates in protein modification; protein ubiquitination. Functionally, substrate-recognition component of a Cul2-RING (CRL2) E3 ubiquitin-protein ligase complex of the DesCEND (destruction via C-end degrons) pathway, which recognizes a C-degron located at the extreme C terminus of target proteins, leading to their ubiquitination and degradation. The C-degron recognized by the DesCEND pathway is usually a motif of less than ten residues and can be present in full-length proteins, truncated proteins or proteolytically cleaved forms. The CRL2(FEM1A) complex specifically recognizes proteins with an arginine at the C-terminus: recognizes and binds proteins ending with -Lys/Arg-Xaa-Arg and -Lys/Arg-Xaa-Xaa-Arg C-degrons, such as SIL1 or OR51B2, leading to their ubiquitination and degradation. Involved in PGE2-EP4-mediated inhibition of inflammation of macrophages via interaction with NFKB1 and PTGER4. Promotes inflammation in brain microglia through MAP2K4/MKK4-mediated signaling. In Bos taurus (Bovine), this protein is Protein fem-1 homolog A.